The sequence spans 84 residues: Small ribosomal subunit protein uS17 (84 aa).

It belongs to the universal ribosomal protein uS17 family. In terms of assembly, part of the 30S ribosomal subunit.

In terms of biological role, one of the primary rRNA binding proteins, it binds specifically to the 5'-end of 16S ribosomal RNA. The chain is Small ribosomal subunit protein uS17 from Shigella boydii serotype 18 (strain CDC 3083-94 / BS512).